A 466-amino-acid polypeptide reads, in one-letter code: RUS family member 1 (466 aa).

N-acetylalanine is present on alanine 2. The chain crosses the membrane as a helical span at residues 245-265; sequence LLMLPLVSDCLSLSLGCFILL.

Belongs to the RUS1 family.

The protein resides in the membrane. The chain is RUS family member 1 (Rusf1) from Rattus norvegicus (Rat).